The primary structure comprises 239 residues: 7-cyano-7-deazaguanine synthase (239 aa).

13–23 (LSGGLDSMVTA) contributes to the ATP binding site. Residues C193, C203, C206, and C209 each coordinate Zn(2+).

It belongs to the QueC family. Requires Zn(2+) as cofactor.

The catalysed reaction is 7-carboxy-7-deazaguanine + NH4(+) + ATP = 7-cyano-7-deazaguanine + ADP + phosphate + H2O + H(+). It functions in the pathway purine metabolism; 7-cyano-7-deazaguanine biosynthesis. Catalyzes the ATP-dependent conversion of 7-carboxy-7-deazaguanine (CDG) to 7-cyano-7-deazaguanine (preQ(0)). This is 7-cyano-7-deazaguanine synthase from Erythrobacter litoralis (strain HTCC2594).